A 205-amino-acid polypeptide reads, in one-letter code: SCO2-like protein RC0895 (205 aa).

Positions 82, 86, and 172 each coordinate Cu cation.

This sequence belongs to the SCO1/2 family.

The protein is SCO2-like protein RC0895 of Rickettsia conorii (strain ATCC VR-613 / Malish 7).